Consider the following 1097-residue polypeptide: DNA-directed RNA polymerase subunit beta (1097 aa).

Residues 1072 to 1097 (QDINPRRNTPSRPTYESLGTSEYEED) form a disordered region. The span at 1077 to 1091 (RRNTPSRPTYESLGT) shows a compositional bias: polar residues.

Belongs to the RNA polymerase beta chain family. In cyanobacteria the RNAP catalytic core is composed of 2 alpha, 1 beta, 1 beta', 1 gamma and 1 omega subunit. When a sigma factor is associated with the core the holoenzyme is formed, which can initiate transcription.

It catalyses the reaction RNA(n) + a ribonucleoside 5'-triphosphate = RNA(n+1) + diphosphate. In terms of biological role, DNA-dependent RNA polymerase catalyzes the transcription of DNA into RNA using the four ribonucleoside triphosphates as substrates. The sequence is that of DNA-directed RNA polymerase subunit beta from Prochlorococcus marinus (strain MIT 9215).